Reading from the N-terminus, the 141-residue chain is ATP synthase F(0) complex subunit C2, mitochondrial (141 aa).

The transit peptide at 1-66 directs the protein to the mitochondrion; sequence MFSCFKFIST…RNFQTSAISR (66 aa). The helical transmembrane segment at 82–102 threads the bilayer; it reads VGVAGSGAGIGTVFGSLIIGY. Lys109 bears the N6,N6,N6-trimethyllysine mark. Residues 117–137 form a helical membrane-spanning segment; it reads ILGFALSEAMGLFCLMVAFLI.

Belongs to the ATPase C chain family. In terms of assembly, F-type ATPases have 2 components, CF(1) - the catalytic core - and CF(0) - the membrane proton channel. CF(1) has five subunits: alpha(3), beta(3), gamma(1), delta(1), epsilon(1). CF(0) has three main subunits: a, b and c. Interacts with DNAJC30; interaction is direct. In terms of processing, trimethylated by ATPSCKMT at Lys-109. Methylation is required for proper incorporation of the C subunit into the ATP synthase complex and mitochondrial respiration.

Its subcellular location is the mitochondrion membrane. Mitochondrial membrane ATP synthase (F(1)F(0) ATP synthase or Complex V) produces ATP from ADP in the presence of a proton gradient across the membrane which is generated by electron transport complexes of the respiratory chain. F-type ATPases consist of two structural domains, F(1) - containing the extramembraneous catalytic core and F(0) - containing the membrane proton channel, linked together by a central stalk and a peripheral stalk. During catalysis, ATP synthesis in the catalytic domain of F(1) is coupled via a rotary mechanism of the central stalk subunits to proton translocation. Part of the complex F(0) domain. A homomeric c-ring of probably 10 subunits is part of the complex rotary element. In Pongo abelii (Sumatran orangutan), this protein is ATP synthase F(0) complex subunit C2, mitochondrial.